Here is a 517-residue protein sequence, read N- to C-terminus: Membrane-bound lytic murein transglycosylase F (517 aa).

The first 32 residues, 1–32 (MKKFKINYLLIGIVTLLLAAALWPSIPWFGKA), serve as a signal peptide directing secretion. The tract at residues 33-269 (ENRIAAIQSR…RLEEKYLGHG (237 aa)) is non-LT domain. Residues 270–517 (GDFDYVDTRS…PNTLVQAPRR (248 aa)) form an LT domain region. Glu-314 is a catalytic residue.

This sequence in the N-terminal section; belongs to the bacterial solute-binding protein 3 family. In the C-terminal section; belongs to the transglycosylase Slt family.

The protein resides in the cell outer membrane. The enzyme catalyses Exolytic cleavage of the (1-&gt;4)-beta-glycosidic linkage between N-acetylmuramic acid (MurNAc) and N-acetylglucosamine (GlcNAc) residues in peptidoglycan, from either the reducing or the non-reducing ends of the peptidoglycan chains, with concomitant formation of a 1,6-anhydrobond in the MurNAc residue.. Functionally, murein-degrading enzyme that degrades murein glycan strands and insoluble, high-molecular weight murein sacculi, with the concomitant formation of a 1,6-anhydromuramoyl product. Lytic transglycosylases (LTs) play an integral role in the metabolism of the peptidoglycan (PG) sacculus. Their lytic action creates space within the PG sacculus to allow for its expansion as well as for the insertion of various structures such as secretion systems and flagella. In Enterobacter sp. (strain 638), this protein is Membrane-bound lytic murein transglycosylase F.